The chain runs to 179 residues: Large ribosomal subunit protein uL5 (179 aa).

Belongs to the universal ribosomal protein uL5 family. In terms of assembly, part of the 50S ribosomal subunit; part of the 5S rRNA/L5/L18/L25 subcomplex. Contacts the 5S rRNA and the P site tRNA. Forms a bridge to the 30S subunit in the 70S ribosome.

In terms of biological role, this is one of the proteins that bind and probably mediate the attachment of the 5S RNA into the large ribosomal subunit, where it forms part of the central protuberance. In the 70S ribosome it contacts protein S13 of the 30S subunit (bridge B1b), connecting the 2 subunits; this bridge is implicated in subunit movement. Contacts the P site tRNA; the 5S rRNA and some of its associated proteins might help stabilize positioning of ribosome-bound tRNAs. This is Large ribosomal subunit protein uL5 from Burkholderia ambifaria (strain MC40-6).